A 79-amino-acid chain; its full sequence is uncharacterized protein (79 aa).

This is an uncharacterized protein from Homo sapiens (Human).